Consider the following 43-residue polypeptide: uncharacterized protein (43 aa).

2 stretches are compositionally biased toward polar residues: residues 1–19 (MSQKLSFFQQNTRNGSGAS) and 33–43 (PENSISKTFSK). Residues 1 to 43 (MSQKLSFFQQNTRNGSGASRTLVIKPPTIQPKPENSISKTFSK) form a disordered region.

This is an uncharacterized protein from Dictyostelium discoideum (Social amoeba).